A 459-amino-acid polypeptide reads, in one-letter code: ATP synthase subunit beta (459 aa).

ATP is bound at residue 148–155 (GGAGVGKT).

The protein belongs to the ATPase alpha/beta chains family. In terms of assembly, F-type ATPases have 2 components, CF(1) - the catalytic core - and CF(0) - the membrane proton channel. CF(1) has five subunits: alpha(3), beta(3), gamma(1), delta(1), epsilon(1). CF(0) has three main subunits: a(1), b(2) and c(9-12). The alpha and beta chains form an alternating ring which encloses part of the gamma chain. CF(1) is attached to CF(0) by a central stalk formed by the gamma and epsilon chains, while a peripheral stalk is formed by the delta and b chains.

It is found in the cell inner membrane. The enzyme catalyses ATP + H2O + 4 H(+)(in) = ADP + phosphate + 5 H(+)(out). In terms of biological role, produces ATP from ADP in the presence of a proton gradient across the membrane. The catalytic sites are hosted primarily by the beta subunits. The polypeptide is ATP synthase subunit beta (Thiobacillus denitrificans (strain ATCC 25259 / T1)).